Reading from the N-terminus, the 286-residue chain is Probable protein VP2 (286 aa).

Disordered stretches follow at residues 67–108 and 184–286; these read LPAA…GPED and QAAR…GGGI. Residues 222–241 show a composition bias toward basic residues; the sequence is GKTRSRRKAGRKAQRKRRRP. Residues 242-265 show a composition bias toward low complexity; the sequence is SPSSSSSSCSNSESWESNSDSCST.

Phosphorylated at C-terminal serines.

This Homo sapiens (Human) protein is Probable protein VP2.